The sequence spans 253 residues: Imidazole glycerol phosphate synthase subunit HisF (253 aa).

Active-site residues include aspartate 11 and aspartate 130.

Belongs to the HisA/HisF family. Heterodimer of HisH and HisF.

Its subcellular location is the cytoplasm. It catalyses the reaction 5-[(5-phospho-1-deoxy-D-ribulos-1-ylimino)methylamino]-1-(5-phospho-beta-D-ribosyl)imidazole-4-carboxamide + L-glutamine = D-erythro-1-(imidazol-4-yl)glycerol 3-phosphate + 5-amino-1-(5-phospho-beta-D-ribosyl)imidazole-4-carboxamide + L-glutamate + H(+). The protein operates within amino-acid biosynthesis; L-histidine biosynthesis; L-histidine from 5-phospho-alpha-D-ribose 1-diphosphate: step 5/9. Its function is as follows. IGPS catalyzes the conversion of PRFAR and glutamine to IGP, AICAR and glutamate. The HisF subunit catalyzes the cyclization activity that produces IGP and AICAR from PRFAR using the ammonia provided by the HisH subunit. The chain is Imidazole glycerol phosphate synthase subunit HisF from Acidobacterium capsulatum (strain ATCC 51196 / DSM 11244 / BCRC 80197 / JCM 7670 / NBRC 15755 / NCIMB 13165 / 161).